The sequence spans 328 residues: Biotin synthase (328 aa).

In terms of domain architecture, Radical SAM core spans 51–282; it reads FNGNHVDLCS…DKIIRYAGGR (232 aa). 3 residues coordinate [4Fe-4S] cluster: C69, C73, and C76. [2Fe-2S] cluster-binding residues include C112, C147, C207, and R277.

It belongs to the radical SAM superfamily. Biotin synthase family. As to quaternary structure, homodimer. Requires [4Fe-4S] cluster as cofactor. [2Fe-2S] cluster is required as a cofactor.

It carries out the reaction (4R,5S)-dethiobiotin + (sulfur carrier)-SH + 2 reduced [2Fe-2S]-[ferredoxin] + 2 S-adenosyl-L-methionine = (sulfur carrier)-H + biotin + 2 5'-deoxyadenosine + 2 L-methionine + 2 oxidized [2Fe-2S]-[ferredoxin]. It participates in cofactor biosynthesis; biotin biosynthesis; biotin from 7,8-diaminononanoate: step 2/2. In terms of biological role, catalyzes the conversion of dethiobiotin (DTB) to biotin by the insertion of a sulfur atom into dethiobiotin via a radical-based mechanism. The polypeptide is Biotin synthase (Clostridium acetobutylicum (strain ATCC 824 / DSM 792 / JCM 1419 / IAM 19013 / LMG 5710 / NBRC 13948 / NRRL B-527 / VKM B-1787 / 2291 / W)).